A 185-amino-acid polypeptide reads, in one-letter code: MAKEEFPGWHGTTIIGVRKGGKVVVAGDGQVSLGPTVIKGSARKVRRLSPGGYDVVCGFAGSTADAFTLLERLEAKLEATPGQLQRASVELAKDWRTDKYLQKLEAMLIVTDGSELYIITGAGDVLEPEHDIAAIGSGGNFALAAARGMMDSDKDAEAVARDAMAIASDICVYTNGNLTVETISA.

Residue threonine 12 is part of the active site. Na(+)-binding residues include serine 168, cysteine 171, and threonine 174.

It belongs to the peptidase T1B family. HslV subfamily. As to quaternary structure, a double ring-shaped homohexamer of HslV is capped on each side by a ring-shaped HslU homohexamer. The assembly of the HslU/HslV complex is dependent on binding of ATP.

The protein localises to the cytoplasm. The catalysed reaction is ATP-dependent cleavage of peptide bonds with broad specificity.. Its activity is regulated as follows. Allosterically activated by HslU binding. Its function is as follows. Protease subunit of a proteasome-like degradation complex believed to be a general protein degrading machinery. The sequence is that of ATP-dependent protease subunit HslV from Jannaschia sp. (strain CCS1).